A 198-amino-acid polypeptide reads, in one-letter code: Recombination protein RecR (198 aa).

The segment at 57 to 72 (CSICGNLTESDPCAIC) adopts a C4-type zinc-finger fold. Residues 80–175 (TTILVVEESK…KVTRLARGLA (96 aa)) form the Toprim domain.

It belongs to the RecR family.

Functionally, may play a role in DNA repair. It seems to be involved in an RecBC-independent recombinational process of DNA repair. It may act with RecF and RecO. The protein is Recombination protein RecR of Lactococcus lactis subsp. cremoris (strain MG1363).